Here is a 293-residue protein sequence, read N- to C-terminus: Tumor necrosis factor receptor type 1-associated DEATH domain protein (293 aa).

Positions 156–171 (LRDDEVTQLEQQLQNS) match the Nuclear export signal motif. Positions 200–290 (TPADQQRFAA…SMAEIMLGIQ (91 aa)) constitute a Death domain. The Nuclear localization signal signature appears at 216 to 229 (KRVGRALQKNCRAL).

Heterodimer with tnfrsf1a.

Its subcellular location is the nucleus. The protein resides in the cytoplasm. The protein localises to the cytoskeleton. Its function is as follows. Adapter molecule for tnfrsf1a that specifically associates with the cytoplasmic domain of activated tnfrsf1a mediating its interaction with fadd. The chain is Tumor necrosis factor receptor type 1-associated DEATH domain protein from Danio rerio (Zebrafish).